The chain runs to 1736 residues: Collagen alpha-2(XI) chain (1736 aa).

The first 27 residues, 1-27, serve as a signal peptide directing secretion; sequence MERCSRCHRLLLFLPLVLGLSAAPGWA. Positions 57–228 constitute a Laminin G-like domain; that stretch reads DVAYRVARPA…QSCGQKDLEC (172 aa). The segment at 215–486 is nonhelical region; that stretch reads QAAYQSCGQK…ILQQARLALR (272 aa). Disordered regions lie at residues 228–270, 364–465, and 485–1538; these read CERE…PTES, LSAE…DKGP, and LRGP…GSPA. Polar residues predominate over residues 258-269; sequence PQSQEPQKQPTE. 3 Collagen-like domains span residues 399–447, 487–545, and 546–583; these read GPPG…GPPG, GPPG…ADGA, and RGMP…GLPG. The interval 487–1500 is triple-helical region; the sequence is GPPGPMGYTG…PGHPGPPGEV (1014 aa). Low complexity predominate over residues 497–533; the sequence is RPGPLGQPGSPGLKGESGDLGPQGPRGPQGLTGPPGK. Positions 615–624 are enriched in pro residues; it reads KGPPGIPGPP. Positions 650–668 are enriched in low complexity; the sequence is QQGTPGAQGLPGPQGAIGP. Positions 682–737 constitute a Collagen-like 4 domain; sequence GMPGSDGLPGHPGKEGPPGTKGNQGPSGPQGPLGYPGPRGVKGVDGIRGLKGHKGE. A compositionally biased stretch (basic and acidic residues) spans 765-774; the sequence is RGEDGPEGPK. 2 stretches are compositionally biased toward low complexity: residues 776 to 789 and 842 to 861; these read RTGP…TGLM and PTGP…SGAK. Collagen-like domains lie at 868 to 924, 967 to 1025, 1026 to 1055, 1056 to 1086, and 1114 to 1172; these read GPHG…PGPP, GDPG…AAGS, GGPI…EKGP, IGPT…DGDK, and GPVG…ETGD. Residues 994–1003 are compositionally biased toward gly residues; sequence GTAGGPGLKG. Positions 1029–1040 are enriched in pro residues; that stretch reads IGPPGRPGPQGP. 2 stretches are compositionally biased toward low complexity: residues 1115–1133 and 1155–1164; these read PVGQ…ARGP and IGLQGLPGPS. A compositionally biased stretch (pro residues) spans 1176–1187; sequence MGPPGPPGPRGP. A compositionally biased stretch (low complexity) spans 1188–1197; it reads AGPNGADGPQ. Residues 1198–1207 show a composition bias toward gly residues; sequence GSPGGVGNLG. A compositionally biased stretch (low complexity) spans 1217–1230; that stretch reads ESGSPGVQGEPGVK. A compositionally biased stretch (basic and acidic residues) spans 1232–1241; sequence PRGERGEKGE. The span at 1256–1272 shows a compositional bias: low complexity; sequence PTGDNGPKGNPGPVGFP. Basic and acidic residues predominate over residues 1287–1296; that stretch reads DGAKGDRGED. The span at 1376–1386 shows a compositional bias: low complexity; that stretch reads QQGRPGATGQA. Composition is skewed to pro residues over residues 1388–1397 and 1457–1467; these read PPGPVGPPGL and PGGPPGLPGPS. 2 Collagen-like domains span residues 1393-1447 and 1448-1499; these read GPPG…GETG and IPGA…PPGE. Residues 1469-1481 are compositionally biased toward low complexity; sequence PKGAKGATGPAGP. Residues 1501–1736 constitute a propeptide, C-terminal propeptide; the sequence is IQPLPIQMPK…VLLGPVCFMG (236 aa). In terms of domain architecture, Fibrillar collagen NC1 spans 1541 to 1735; sequence EEIFGSLDSL…GVLLGPVCFM (195 aa). Cys-1571 and Cys-1603 are disulfide-bonded. Residues Asp-1589, Asn-1591, Gln-1592, Cys-1594, and Asp-1597 each contribute to the Ca(2+) site. N-linked (GlcNAc...) asparagine glycosylation is present at Asn-1604. Cystine bridges form between Cys-1612-Cys-1733 and Cys-1655-Cys-1689.

Belongs to the fibrillar collagen family. As to quaternary structure, trimers composed of three different chains: alpha 1(XI), alpha 2(XI), and alpha 3(XI). Alpha 3(XI) is a post-translational modification of alpha 1(II). Alpha 1(V) can also be found instead of alpha 3(XI)=1(II). In terms of processing, prolines at the third position of the tripeptide repeating unit (G-X-Y) are hydroxylated in some or all of the chains.

It localises to the secreted. The protein resides in the extracellular space. It is found in the extracellular matrix. Functionally, may play an important role in fibrillogenesis by controlling lateral growth of collagen II fibrils. The chain is Collagen alpha-2(XI) chain (Col11a2) from Mus musculus (Mouse).